The primary structure comprises 1343 residues: DNA-directed RNA polymerase subunit beta (1343 aa).

It belongs to the RNA polymerase beta chain family. As to quaternary structure, the RNAP catalytic core consists of 2 alpha, 1 beta, 1 beta' and 1 omega subunit. When a sigma factor is associated with the core the holoenzyme is formed, which can initiate transcription.

It catalyses the reaction RNA(n) + a ribonucleoside 5'-triphosphate = RNA(n+1) + diphosphate. Functionally, DNA-dependent RNA polymerase catalyzes the transcription of DNA into RNA using the four ribonucleoside triphosphates as substrates. The polypeptide is DNA-directed RNA polymerase subunit beta (Shewanella woodyi (strain ATCC 51908 / MS32)).